The following is a 167-amino-acid chain: NAD(P)H-quinone oxidoreductase subunit I, chloroplastic (167 aa).

2 consecutive 4Fe-4S ferredoxin-type domains span residues 55–84 (GRIHFEFDKCIACEVCVRVCPIDLPVVDWK) and 95–124 (LNYSIDFGICIFCGNCVEYCPTNCLSMTEE). 8 residues coordinate [4Fe-4S] cluster: Cys64, Cys67, Cys70, Cys74, Cys104, Cys107, Cys110, and Cys114.

It belongs to the complex I 23 kDa subunit family. As to quaternary structure, NDH is composed of at least 16 different subunits, 5 of which are encoded in the nucleus. [4Fe-4S] cluster serves as cofactor.

The protein resides in the plastid. The protein localises to the chloroplast thylakoid membrane. The catalysed reaction is a plastoquinone + NADH + (n+1) H(+)(in) = a plastoquinol + NAD(+) + n H(+)(out). It carries out the reaction a plastoquinone + NADPH + (n+1) H(+)(in) = a plastoquinol + NADP(+) + n H(+)(out). NDH shuttles electrons from NAD(P)H:plastoquinone, via FMN and iron-sulfur (Fe-S) centers, to quinones in the photosynthetic chain and possibly in a chloroplast respiratory chain. The immediate electron acceptor for the enzyme in this species is believed to be plastoquinone. Couples the redox reaction to proton translocation, and thus conserves the redox energy in a proton gradient. The protein is NAD(P)H-quinone oxidoreductase subunit I, chloroplastic of Panax ginseng (Korean ginseng).